Here is a 597-residue protein sequence, read N- to C-terminus: Siderophore iron transporter 2 (597 aa).

Phosphoserine is present on S46. A run of 14 helical transmembrane segments spans residues 65-85 (IIVAYLGLYLLSFASSLEQQT), 97-117 (FSAHSNLATINLVGNILLAVV), 131-151 (SESLSLALGMTVLGYLSLAFS), 159-179 (VAYILYICGQTGLGLLSQLII), 190-210 (ILSAIPELPYLATVWIGPVLA), 225-245 (YGIWAFILPTVSLPLLASLFL), 281-301 (LDGLGIVLFVSGFTLLLLPFS), 312-332 (TILTLFTITLSIALLVTLCFY), 357-377 (VLIFTYFMSYYIFSNFLTSFL), 390-410 (LTLNVFVFSMTTTAILSGFLM), 419-439 (LLMISVPMYVLGILGIILFGI), 448-468 (LVLVLILAGMGGGLLTLSAQI), 485-505 (LYLTFSSVGGAFGSAIAGGVW), and 558-578 (KDLFHISLVASLFMFAGLVII).

This sequence belongs to the major facilitator superfamily.

It is found in the membrane. In terms of biological role, involved in the transport of siderophore iron and so has a role in iron homeostasis. This is Siderophore iron transporter 2 (str2) from Schizosaccharomyces pombe (strain 972 / ATCC 24843) (Fission yeast).